The following is a 326-amino-acid chain: 3-oxopimeloyl-[acyl-carrier-protein] synthase (326 aa).

Residues Cys115 and His253 contribute to the active site. Residues 254–258 (QANIR) form an ACP-binding region. Residue Asn283 is part of the active site.

It belongs to the thiolase-like superfamily. BioZ family.

The catalysed reaction is malonyl-[ACP] + an acyl-CoA + H(+) = a 3-oxoacyl-[ACP] + CO2 + CoA. The enzyme catalyses glutaryl-CoA + malonyl-[ACP] + H(+) = 3-oxo-6-carboxyhexanoyl-[ACP] + CO2 + CoA. It functions in the pathway cofactor biosynthesis; biotin biosynthesis. Functionally, involved in the formation of the biotin precursor pimeloyl-ACP. Catalyzes the condensation of glutaryl-CoA, an intermediate in lysine degradation, with malonyl-ACP to produce 3-oxopimeloyl-ACP. The chain is 3-oxopimeloyl-[acyl-carrier-protein] synthase from Brucella abortus (strain 2308).